A 246-amino-acid chain; its full sequence is Phosducin (246 aa).

Over residues 1-14 the composition is skewed to acidic residues; the sequence is MEEAASQSLEEDFE. The tract at residues 1–70 is disordered; sequence MEEAASQSLE…DKDSKERMSR (70 aa). Positions 1–246 constitute a Phosducin domain; sequence MEEAASQSLE…QTNTEDEDIE (246 aa). The segment covering 58 to 69 has biased composition (basic and acidic residues); that stretch reads SRDDKDSKERMS. Residue Ser73 is modified to Phosphoserine; by PKA. The segment at 111 to 246 is thioredoxin fold; sequence YGFVYELETG…QTNTEDEDIE (136 aa).

Belongs to the phosducin family. In terms of assembly, interacts with CRX. Forms a complex with the beta and gamma subunits of the GTP-binding protein, transducin. In terms of processing, light-induced changes in cyclic nucleotide levels modulate the phosphorylation of this protein by cAMP kinase.

It localises to the cytoplasm. The protein localises to the cytosol. Its subcellular location is the nucleus. The protein resides in the cell projection. It is found in the cilium. It localises to the photoreceptor outer segment. The protein localises to the photoreceptor inner segment. Inhibits the transcriptional activation activity of the cone-rod homeobox CRX. May participate in the regulation of visual phototransduction or in the integration of photoreceptor metabolism. This is Phosducin (Pdc) from Rattus norvegicus (Rat).